The primary structure comprises 539 residues: MTEPWIAFPPEVHSAMLNYGAGVGPMLISATQNGELSAQYAEAASEVEELLGVVASEGWQGQAAEAFVAAYMPFLAWLIQASADCVEMAAQQHVVIEAYTAAVELMPTQVELAANQIKLAVLVATNFFGINTIPIAINEAEYVEMWVRAATTMATYSTVSRSALSAMPHTSPPPLILKSDELLPDTGEDSDEDGHNHGGHSHGGHARMIDNFFAEILRGVSAGRIVWDPVNGTLNGLDYDDYVYPGHAIWWLARGLEFFQDGEQFGELLFTNPTGAFQFLLYVVVVDLPTHIAQIATWLGQYPQLLSAALTGVIAHLGAITGLAGLSGLSAIPSAAIPAVVPELTPVAAAPPMLAVAGVGPAVAAPGMLPASAPAPAAAAGATAAGPTPPATGFGGFPPYLVGGGGPGIGFGSGQSAHAKAAASDSAAAESAAQASARAQARAARRGRSAAKARGHRDEFVTMDMGFDAAAPAPEHQPGARASDCGAGPIGFAGTVRKEAVVKAAGLTTLAGDDFGGGPTMPMMPGTWTHDQGVFDEHR.

Disordered regions lie at residues 179 to 203 and 433 to 459; these read SDEL…HSHG and AQAS…HRDE. Positions 182 to 192 are enriched in acidic residues; it reads LLPDTGEDSDE. Residues 433 to 442 are compositionally biased toward low complexity; the sequence is AQASARAQAR. A compositionally biased stretch (basic residues) spans 443–455; it reads AARRGRSAAKARG.

It belongs to the mycobacterial PPE family.

It localises to the secreted. This is an uncharacterized protein from Mycobacterium tuberculosis (strain CDC 1551 / Oshkosh).